Reading from the N-terminus, the 309-residue chain is Protein FdhE (309 aa).

The protein belongs to the FdhE family.

It localises to the cytoplasm. In terms of biological role, necessary for formate dehydrogenase activity. This is Protein FdhE from Escherichia coli O127:H6 (strain E2348/69 / EPEC).